The chain runs to 348 residues: Protein RecA (348 aa).

64–71 (GPESSGKT) serves as a coordination point for ATP. Over residues 325–335 (YEIDGASKEPL) the composition is skewed to basic and acidic residues. The segment at 325 to 348 (YEIDGASKEPLEETEETLSLLDDE) is disordered. Residues 336-348 (EETEETLSLLDDE) show a composition bias toward acidic residues.

This sequence belongs to the RecA family.

It is found in the cytoplasm. In terms of biological role, can catalyze the hydrolysis of ATP in the presence of single-stranded DNA, the ATP-dependent uptake of single-stranded DNA by duplex DNA, and the ATP-dependent hybridization of homologous single-stranded DNAs. It interacts with LexA causing its activation and leading to its autocatalytic cleavage. In Listeria seeligeri, this protein is Protein RecA.